The following is a 2240-amino-acid chain: Cadherin-89D (2240 aa).

5 Cadherin domains span residues 70-179, 180-295, 296-411, 412-528, and 529-643; these read SEGV…APEF, LNVP…PPKF, TEGV…VPEF, EADY…TPKF, and EHGN…APYE. N-linked (GlcNAc...) asparagine glycans are attached at residues Asn-114, Asn-119, Asn-191, Asn-278, Asn-334, Asn-417, Asn-585, Asn-720, Asn-752, Asn-822, Asn-833, Asn-983, Asn-989, Asn-1006, Asn-1255, Asn-1318, Asn-1486, Asn-1529, and Asn-1556. The tract at residues 814–844 is disordered; that stretch reads MPSEPTSRNITMGSRFRSRNRSRSSKSKRRL. 5 consecutive Cadherin domains span residues 824–927, 928–1087, 1171–1284, 1285–1389, and 1411–1520; these read TMGS…APKF, NALT…APMF, TTKC…APTF, KKSW…RPEF, and MLPV…PPKS. The span at 829–844 shows a compositional bias: basic residues; sequence FRSRNRSRSSKSKRRL. Cadherin domains lie at 1534 to 1660 and 1661 to 1774; these read QHAY…APKF and RGNG…MPVE. The helical transmembrane segment at 1884 to 1904 threads the bilayer; it reads FVTVVLLALISLGALIAACCY. At 1905 to 2240 the chain is on the cytoplasmic side; that stretch reads VCMRQKRRLW…LEFSKSNSLF (336 aa). Disordered stretches follow at residues 1930 to 1972 and 2121 to 2140; these read IAGI…PESV and AHLELRQPNTDSSDTYEDSL. A compositionally biased stretch (basic residues) spans 1939 to 1952; sequence QKQRRQRQQRHTQR. A compositionally biased stretch (polar residues) spans 1953–1964; that stretch reads CSKGSTGSQRPT.

The protein localises to the cell membrane. Functionally, cadherins are calcium-dependent cell adhesion proteins. They preferentially interact with themselves in a homophilic manner in connecting cells. The sequence is that of Cadherin-89D (Cad89D) from Drosophila melanogaster (Fruit fly).